Consider the following 364-residue polypeptide: Peptide chain release factor 2 (364 aa).

Residue Gln-251 is modified to N5-methylglutamine.

The protein belongs to the prokaryotic/mitochondrial release factor family. In terms of processing, methylated by PrmC. Methylation increases the termination efficiency of RF2.

The protein localises to the cytoplasm. In terms of biological role, peptide chain release factor 2 directs the termination of translation in response to the peptide chain termination codons UGA and UAA. The protein is Peptide chain release factor 2 (prfB) of Buchnera aphidicola subsp. Schizaphis graminum (strain Sg).